The chain runs to 428 residues: MTEAVPTDSVDSKASSQVNSAENPFPVRAVALRIAGWIDKLGTVWVEGQLAQITMRPNAKTVFMVLRDPAADISLIVTCSRDFVLRAPVKLAEGIQVVVCGKPSFYIGRGTFSLRLSDIRAVGIGELLVRIDRLRRLLDSEGLFDPRLKRPIPFLPNMIGIITGRASAAERDVTTVASARWPAARFAIRNTAVQGPNAVSQIVEALRELDRNVDVEVIVVARGGGSVEDLLTFSDETLCRAIAACRTPVISAVGHEPDNPLCDLVADLRAATPTDAAKKVVPDAAVEQRLIEDLQRRSAQALRNWVSREQRTLVQLRSRPVLAEPLRTLTTRSEEIHRAQSAIRREIIRLVTTETERVGHLATQLATLGPAATLARGYAIVQALEDGTQTVTAAVLRSVDDAPTGTRLRVRVSDGAIVAVSEGRADGP.

This sequence belongs to the XseA family. Heterooligomer composed of large and small subunits.

The protein localises to the cytoplasm. The enzyme catalyses Exonucleolytic cleavage in either 5'- to 3'- or 3'- to 5'-direction to yield nucleoside 5'-phosphates.. Bidirectionally degrades single-stranded DNA into large acid-insoluble oligonucleotides, which are then degraded further into small acid-soluble oligonucleotides. In Mycobacterium leprae (strain TN), this protein is Exodeoxyribonuclease 7 large subunit.